The following is a 465-amino-acid chain: Tubulin gamma chain (465 aa).

144–150 contacts GTP; it reads AGGTGSG.

This sequence belongs to the tubulin family.

Its subcellular location is the cytoplasm. It localises to the cytoskeleton. The protein localises to the microtubule organizing center. It is found in the spindle pole body. Its function is as follows. Tubulin is the major constituent of microtubules. The gamma chain is found at microtubule organizing centers (MTOC) such as the spindle poles or the centrosome, suggesting that it is involved in the minus-end nucleation of microtubule assembly. The polypeptide is Tubulin gamma chain (TUB4) (Candida glabrata (strain ATCC 2001 / BCRC 20586 / JCM 3761 / NBRC 0622 / NRRL Y-65 / CBS 138) (Yeast)).